We begin with the raw amino-acid sequence, 388 residues long: Succinate--CoA ligase [ADP-forming] subunit beta (388 aa).

One can recognise an ATP-grasp domain in the interval 9–244 (KSLFAEYGLP…PSQDDAREAH (236 aa)). Residues Lys-46, 53 to 55 (GRG), Glu-99, Thr-102, and Glu-107 contribute to the ATP site. 2 residues coordinate Mg(2+): Asn-199 and Asp-213. Substrate is bound by residues Asn-264 and 321 to 323 (GIV).

Belongs to the succinate/malate CoA ligase beta subunit family. As to quaternary structure, heterotetramer of two alpha and two beta subunits. Requires Mg(2+) as cofactor.

The catalysed reaction is succinate + ATP + CoA = succinyl-CoA + ADP + phosphate. It carries out the reaction GTP + succinate + CoA = succinyl-CoA + GDP + phosphate. It functions in the pathway carbohydrate metabolism; tricarboxylic acid cycle; succinate from succinyl-CoA (ligase route): step 1/1. Functionally, succinyl-CoA synthetase functions in the citric acid cycle (TCA), coupling the hydrolysis of succinyl-CoA to the synthesis of either ATP or GTP and thus represents the only step of substrate-level phosphorylation in the TCA. The beta subunit provides nucleotide specificity of the enzyme and binds the substrate succinate, while the binding sites for coenzyme A and phosphate are found in the alpha subunit. This Shewanella woodyi (strain ATCC 51908 / MS32) protein is Succinate--CoA ligase [ADP-forming] subunit beta.